The chain runs to 111 residues: WAP four-disulfide core domain protein 12 (111 aa).

An N-terminal signal peptide occupies residues 1 to 23 (MGSSSFLVLMVSLTLVTLVAVEG). Residues 27–74 (DIEKAGVCPADNVRCFKSDPPQCHTDQDCLGERKCCYLHCGFKCVIPV) form the WAP domain. Disulfide bonds link Cys-34–Cys-62, Cys-41–Cys-66, Cys-49–Cys-61, and Cys-55–Cys-70. The segment at 80 to 111 (GGNKDEDVSRPYPEPGWEAKCPGSSSTRCPQK) is disordered. Over residues 102–111 (GSSSTRCPQK) the composition is skewed to polar residues.

The protein localises to the secreted. Its function is as follows. Antibacterial protein. Putative acid-stable proteinase inhibitor. The sequence is that of WAP four-disulfide core domain protein 12 (WFDC12) from Pan troglodytes (Chimpanzee).